Consider the following 262-residue polypeptide: Ribose-5-phosphate isomerase A (262 aa).

Substrate contacts are provided by residues 33-36, 89-92, and 102-105; these read TGST, DGAD, and KGGG. Catalysis depends on Glu-111, which acts as the Proton acceptor. Lys-129 is a binding site for substrate.

The protein belongs to the ribose 5-phosphate isomerase family. As to quaternary structure, homodimer.

The catalysed reaction is aldehydo-D-ribose 5-phosphate = D-ribulose 5-phosphate. Its pathway is carbohydrate degradation; pentose phosphate pathway; D-ribose 5-phosphate from D-ribulose 5-phosphate (non-oxidative stage): step 1/1. Its function is as follows. Catalyzes the reversible conversion of ribose-5-phosphate to ribulose 5-phosphate. The sequence is that of Ribose-5-phosphate isomerase A from Roseobacter denitrificans (strain ATCC 33942 / OCh 114) (Erythrobacter sp. (strain OCh 114)).